A 78-amino-acid polypeptide reads, in one-letter code: Mambalgin-1 (78 aa).

The N-terminal stretch at 1–21 is a signal peptide; sequence MKTLLLTLLVVTIVCLDLGYS. 4 cysteine pairs are disulfide-bonded: Cys-24–Cys-40, Cys-33–Cys-58, Cys-62–Cys-70, and Cys-71–Cys-76.

It belongs to the three-finger toxin family. Short-chain subfamily. Mambalgin sub-subfamily. In terms of tissue distribution, expressed by the venom gland.

The protein localises to the secreted. Its function is as follows. This three-finger toxin inhibits ASIC channels. It acts as a gating modifier toxin by decreasing the apparent proton sensitivity of activation and by slightly increasing the apparent proton sensitivity for inactivation. It binds more tightly to the closed state and to a much lesser extent the inactivated/desensitized state of ASIC1a isoform of ASIC1. It interacts directly with the outside surface of the thumb domain of chicken ASIC1a (ASIC1a), but does not insert into the acidic pocket as suggested for mambalgin-2. This binding leads to relocation of the thumb domain that could disrupt the acidic pocket of cASIC1a. It reversibly inhibits rat ASIC1a (IC(50)=3.4-55 nM), rat ASIC1a-ASIC2b (IC(50)=61 nM), rat ASIC1a-ASIC1b (IC(50)=72 nM), human ASIC1a (IC(50)=127-580 nM), chicken ASIC1a (IC(50)=123.6 nM), rat ASIC1b (IC(50)=22.2-203 nM), rat ASIC1a-ASIC2a (IC(50)=152-252 nM). In vivo, it shows a potent naloxone-resistant analgesic effect against acute and inflammatory pain upon central and peripheral injection. In addition, it also has an opioid-independent effect on both thermal and mechanical inflammatory pain after systemic administration and is effective against neuropathic pain. The chain is Mambalgin-1 from Dendroaspis polylepis polylepis (Black mamba).